The primary structure comprises 1060 residues: Protein FAM184B (1060 aa).

Residues 1 to 17 are compositionally biased toward polar residues; that stretch reads MASALNSKINPPGTCQG. A disordered region spans residues 1–24; sequence MASALNSKINPPGTCQGSKADGGA. A coiled-coil region spans residues 51–159; the sequence is ALNTRQDEAE…EMLELKADYE (109 aa). The interval 165–191 is disordered; sequence LTSHEATPQGRLPQESPETKSEPGQGP. 2 coiled-coil regions span residues 192–333 and 402–502; these read EMQE…DRMM and MKQQ…RLEE. 3 disordered regions span residues 532–566, 681–700, and 762–803; these read QDPCLKLDETSPRGEEYQDKLAAEEGTSSDEEERT, TEERLKKESSHSLQIQHQTH, and GRQQ…GSGE. 3 stretches are compositionally biased toward basic and acidic residues: residues 536 to 554, 681 to 690, and 773 to 785; these read LKLDETSPRGEEYQDKLAA, TEERLKKESS, and DSKDHIIATEERG. The stretch at 584-769 forms a coiled coil; the sequence is LKEKTSKIQR…ALGRQQASSQ (186 aa). Positions 806–934 form a coiled coil; that stretch reads GLWEENAQLQ…KQLTEERRFH (129 aa). Polar residues-rich tracts occupy residues 994 to 1009 and 1018 to 1030; these read SRINAPPITTSPSLDP and KPNQSTDAKTATR. Positions 994–1050 are disordered; that stretch reads SRINAPPITTSPSLDPSPSCGRTYKPNQSTDAKTATRTPDGETAQAKEVQQKQGSPH.

This sequence belongs to the FAM184 family.

The sequence is that of Protein FAM184B (FAM184B) from Homo sapiens (Human).